We begin with the raw amino-acid sequence, 194 residues long: Putative 3-methyladenine DNA glycosylase (194 aa).

This sequence belongs to the DNA glycosylase MPG family.

This Chlamydia felis (strain Fe/C-56) (Chlamydophila felis) protein is Putative 3-methyladenine DNA glycosylase.